The chain runs to 671 residues: UvrABC system protein B (671 aa).

In terms of domain architecture, Helicase ATP-binding spans 31–414; the sequence is DGFEQGEKAQ…ELNQTDHKVE (384 aa). 44–51 contacts ATP; sequence GATGTGKT. A Beta-hairpin motif is present at residues 97 to 120; the sequence is YYDYYQPEAYVPQSDTYIEKDSSI. In terms of domain architecture, Helicase C-terminal spans 435–601; the sequence is QIDDLVGEVN…TIVKPIRDVI (167 aa). A UVR domain is found at 630–665; it reads QNMIKTLTAQMQEAAKKLDFEEAANLRDAIMDLKKQ.

The protein belongs to the UvrB family. As to quaternary structure, forms a heterotetramer with UvrA during the search for lesions. Interacts with UvrC in an incision complex.

It is found in the cytoplasm. Its function is as follows. The UvrABC repair system catalyzes the recognition and processing of DNA lesions. A damage recognition complex composed of 2 UvrA and 2 UvrB subunits scans DNA for abnormalities. Upon binding of the UvrA(2)B(2) complex to a putative damaged site, the DNA wraps around one UvrB monomer. DNA wrap is dependent on ATP binding by UvrB and probably causes local melting of the DNA helix, facilitating insertion of UvrB beta-hairpin between the DNA strands. Then UvrB probes one DNA strand for the presence of a lesion. If a lesion is found the UvrA subunits dissociate and the UvrB-DNA preincision complex is formed. This complex is subsequently bound by UvrC and the second UvrB is released. If no lesion is found, the DNA wraps around the other UvrB subunit that will check the other stand for damage. The protein is UvrABC system protein B of Lactobacillus johnsonii (strain CNCM I-12250 / La1 / NCC 533).